The chain runs to 389 residues: Succinate--CoA ligase [ADP-forming] subunit beta (389 aa).

The ATP-grasp domain occupies 9–244 (KELLRQFNVP…IDEEDAAEIE (236 aa)). ATP contacts are provided by residues Lys46, 53–55 (GRG), Glu99, Ala102, and Glu107. Positions 199 and 213 each coordinate Mg(2+). Residues Asn264 and 321 to 323 (GIM) contribute to the substrate site.

The protein belongs to the succinate/malate CoA ligase beta subunit family. In terms of assembly, heterotetramer of two alpha and two beta subunits. Mg(2+) serves as cofactor.

The enzyme catalyses succinate + ATP + CoA = succinyl-CoA + ADP + phosphate. It carries out the reaction GTP + succinate + CoA = succinyl-CoA + GDP + phosphate. It functions in the pathway carbohydrate metabolism; tricarboxylic acid cycle; succinate from succinyl-CoA (ligase route): step 1/1. Its function is as follows. Succinyl-CoA synthetase functions in the citric acid cycle (TCA), coupling the hydrolysis of succinyl-CoA to the synthesis of either ATP or GTP and thus represents the only step of substrate-level phosphorylation in the TCA. The beta subunit provides nucleotide specificity of the enzyme and binds the substrate succinate, while the binding sites for coenzyme A and phosphate are found in the alpha subunit. The chain is Succinate--CoA ligase [ADP-forming] subunit beta from Polynucleobacter asymbioticus (strain DSM 18221 / CIP 109841 / QLW-P1DMWA-1) (Polynucleobacter necessarius subsp. asymbioticus).